A 378-amino-acid polypeptide reads, in one-letter code: Putative glutamate--cysteine ligase 2 (378 aa).

It belongs to the glutamate--cysteine ligase type 2 family. YbdK subfamily.

The catalysed reaction is L-cysteine + L-glutamate + ATP = gamma-L-glutamyl-L-cysteine + ADP + phosphate + H(+). Its function is as follows. ATP-dependent carboxylate-amine ligase which exhibits weak glutamate--cysteine ligase activity. The sequence is that of Putative glutamate--cysteine ligase 2 from Salinispora arenicola (strain CNS-205).